The sequence spans 238 residues: Monocyte to macrophage differentiation factor (238 aa).

The Cytoplasmic segment spans residues 1-28 (MRFKNRFQRFMNHRAPANGRYKPTCYEH). The chain crosses the membrane as a helical span at residues 29 to 49 (AANCYTHAFLIVPAIVGSALL). Over 50–61 (HRLSDDCWEKIT) the chain is Lumenal. A helical transmembrane segment spans residues 62–82 (AWIYGMGLCALFIVSTVFHIV). Topologically, residues 83 to 101 (SWKKSHLRTVEHCFHMCDR) are cytoplasmic. Residues 102–122 (MVIYFFIAASYAPWLNLRELG) form a helical membrane-spanning segment. Topologically, residues 123–124 (PL) are lumenal. A helical membrane pass occupies residues 125–145 (ASHMRWFIWLMAAGGTIYVFL). The Cytoplasmic portion of the chain corresponds to 146–151 (YHEKYK). The helical transmembrane segment at 152–172 (VVELFFYLTMGFSPALVVTSM) threads the bilayer. The Lumenal segment spans residues 173–174 (NN). Residues 175 to 195 (TDGLQELACGGLIYCLGVVFF) form a helical membrane-spanning segment. Residues 196 to 198 (KSD) lie on the Cytoplasmic side of the membrane. The chain crosses the membrane as a helical span at residues 199–219 (GIIPFAHAIWHLFVATAAAVH). At 220–238 (YYAIWKYLYRSPTDFMRHL) the chain is on the lumenal side.

Belongs to the ADIPOR family. As to expression, exhibits relatively ubiquitous expression with preferential expression in mature (in vitro differentiated) macrophages.

The protein localises to the late endosome membrane. Its subcellular location is the lysosome membrane. Involved in the dynamics of lysosomal membranes associated with microglial activation following brain lesion. The polypeptide is Monocyte to macrophage differentiation factor (Homo sapiens (Human)).